Consider the following 330-residue polypeptide: Polyprenal reductase (330 aa).

Over 1–19 (MASWVGTELSALNPLRTLW) the chain is Cytoplasmic. Residues 20–40 (LALAAAFLLALLLQLAPAGLL) form a helical membrane-spanning segment. Residues 41-74 (PNCALFQDLIRYGKTKLSGPRRPAVCRAFDVPKR) are Lumenal-facing. The helical transmembrane segment at 75–95 (YFSHFYVVSVLWNGFLLWFLS) threads the bilayer. Residues 96–132 (RSLFLGAPFPNWLRALLRTLGSTQFRALEMESKASQM) are Cytoplasmic-facing. Residues 133-153 (LVGELALSAFLVLVFLWVHSV) form a helical membrane-spanning segment. Over 154-168 (RRLFECFYISVFSNA) the chain is Lumenal. The helical transmembrane segment at 169–189 (VMHVVQYCFGLVYYVLVGLTV) threads the bilayer. At 190–206 (LSQVPMDDKNVYMLGKN) the chain is on the cytoplasmic side. Residues 207-227 (LLLPARWFHVLGMMMFLWSSA) form a helical membrane-spanning segment. The Lumenal portion of the chain corresponds to 228-277 (HQYECHVILSNLRRNKKGAIVHCQHRIPFGDWFEYVSSANYLAELMIYIS). A helical membrane pass occupies residues 278–298 (MAVTFGFHNFTWWLVVAYVFF). Residues 299-330 (CQALSAFFNHKFYKSTFVSYPKHRKAFLPFLF) are Cytoplasmic-facing.

This sequence belongs to the steroid 5-alpha reductase family. Polyprenal reductase subfamily.

It is found in the endoplasmic reticulum membrane. It catalyses the reaction a di-trans,poly-cis-dolichal + NADP(+) = a di-trans,poly-cis-polyprenal + NADPH + H(+). The enzyme catalyses a 3-oxo-5alpha-steroid + NADP(+) = a 3-oxo-Delta(4)-steroid + NADPH + H(+). The catalysed reaction is androst-4-ene-3,17-dione + NADPH + H(+) = 5alpha-androstan-3,17-dione + NADP(+). It carries out the reaction 17beta-hydroxy-5alpha-androstan-3-one + NADP(+) = testosterone + NADPH + H(+). The protein operates within protein modification; protein glycosylation. In terms of biological role, plays a key role in early steps of protein N-linked glycosylation by being involved in the conversion of polyprenol into dolichol. Acts as a polyprenal reductase that mediates the reduction of polyprenal into dolichal in a NADP-dependent mechanism. Dolichols are required for the synthesis of dolichol-linked monosaccharides and the oligosaccharide precursor used for N-glycosylation. Also able to convert testosterone (T) into 5-alpha-dihydrotestosterone (DHT). This chain is Polyprenal reductase, found in Mesocricetus auratus (Golden hamster).